The primary structure comprises 231 residues: Aspartate/glutamate leucyltransferase (231 aa).

This sequence belongs to the R-transferase family. Bpt subfamily.

It is found in the cytoplasm. It carries out the reaction N-terminal L-glutamyl-[protein] + L-leucyl-tRNA(Leu) = N-terminal L-leucyl-L-glutamyl-[protein] + tRNA(Leu) + H(+). It catalyses the reaction N-terminal L-aspartyl-[protein] + L-leucyl-tRNA(Leu) = N-terminal L-leucyl-L-aspartyl-[protein] + tRNA(Leu) + H(+). Its function is as follows. Functions in the N-end rule pathway of protein degradation where it conjugates Leu from its aminoacyl-tRNA to the N-termini of proteins containing an N-terminal aspartate or glutamate. The sequence is that of Aspartate/glutamate leucyltransferase from Pseudoalteromonas atlantica (strain T6c / ATCC BAA-1087).